Here is a 208-residue protein sequence, read N- to C-terminus: Protein disulfide-isomerase A3 (208 aa).

The 44-residue stretch at 1–44 folds into the Thioredoxin 1 domain; it reads RLAPEYEAAATRYGVSGYPTLKDGEEAGAYDGPRTADGIVSHLK. Position 44 is an N6-succinyllysine (K44). Residue K49 is modified to N6-acetyllysine. A Phosphothreonine modification is found at T133. Positions 151-208 constitute a Thioredoxin 2 domain; sequence SRFLQDYFDGNLKRYLKSEPIPETNDGPVKMDATANDVPSPYEVKGFPTIYFSPANKK. Position 163 is an N6-acetyllysine (K163).

Belongs to the protein disulfide isomerase family. In terms of assembly, part of the major histocompatibility complex class I (MHC I) peptide loading complex composed of TAP1, TAP2, B2M, MHC heavy chain, TAPBP, PDIA3, and CALR. Interacts with ERP27 and CANX. Interacts with SERPINA2 and SERPINA1. Interacts with ATP2A2. Post-translationally, within the major histocompatibility complex class I (MHC I) peptide loading complex forms reversible disulfide-linked heterodimers with TAPBP as part of its protein folding chaperone activity. This is essential to assist the dynamic assembly of the MHC I complex with high affinity antigens in the endoplasmic reticulum. Phosphorylated. As to expression, in the caput epididymal spermatozoa, detected in the mid-peice and at low levels in the principal piece. In the cauda epididymal spermatozoa, detected at very low levels in the principal piece and not in the mid-piece (at protein level).

The protein localises to the endoplasmic reticulum. Its subcellular location is the endoplasmic reticulum lumen. It is found in the melanosome. The enzyme catalyses Catalyzes the rearrangement of -S-S- bonds in proteins.. Functionally, protein disulfide isomerase that catalyzes the formation, isomerization, and reduction or oxidation of disulfide bonds in client proteins and functions as a protein folding chaperone. Core component of the major histocompatibility complex class I (MHC I) peptide loading complex where it functions as an essential folding chaperone for TAPBP. Through TAPBP, assists the dynamic assembly of the MHC I complex with high affinity antigens in the endoplasmic reticulum. Therefore, plays a crucial role in the presentation of antigens to cytotoxic T cells in adaptive immunity. This Mesocricetus auratus (Golden hamster) protein is Protein disulfide-isomerase A3.